The primary structure comprises 326 residues: Transcription factor WRKY45-1 (326 aa).

2 disordered regions span residues 67-114 (GGEG…SVVV) and 252-288 (GVGS…FGPD). Positions 112–180 (VVVKNLDDGQ…YIGEHTCRDP (69 aa)) form a DNA-binding region, WRKY. The span at 273–283 (RGGGGGGGVAG) shows a compositional bias: gly residues.

It belongs to the WRKY group III family. In terms of tissue distribution, expressed in aleurone cells.

Its subcellular location is the nucleus. Transcriptional activator involved in defense responses against pathogens. Acts as a positive regulator of defense responses against the rice blast fungus Magnaporthe oryzae. Acts through W-boxes, which are cis-elements that are enriched in the promoters of several defense-related genes. Plays an important role in the benzothiadiazole-induced disease resistance by mediating salicylic acid (SA) defense signaling pathway, independently of the disease resistance gene NPR1/NH1. Acts as a negative regulator of defense responses against the bacterial blight Xanthomonas oryzae pv oryzae (Xoo) and the bacterial streak Xanthomonas oryzae pv oryzicola (Xoc). Acts downstream of abscisic acid (ABA) signaling in response to the rice blast fungus. ABA is a negative regulator of defense responses that interacts antagonistically with salicylic acid (SA) signaling pathway. Acts as a negative regulator of ABA signaling that suppresses growth of seedlings. Does not seem to be involved in the regulation of salt stress response. Acts as a negative regulator of cold stress response. Acts as a negative regulator of drought stress response. This is Transcription factor WRKY45-1 from Oryza sativa subsp. japonica (Rice).